Reading from the N-terminus, the 354-residue chain is Serum paraoxonase/arylesterase 2 (354 aa).

Cysteines 42 and 352 form a disulfide. Residues aspartate 53 and aspartate 54 each coordinate Ca(2+). Residue histidine 114 is the Proton acceptor of the active site. 4 residues coordinate Ca(2+): isoleucine 116, asparagine 167, aspartate 168, and asparagine 223. The N-linked (GlcNAc...) asparagine glycan is linked to asparagine 254. 2 residues coordinate Ca(2+): aspartate 268 and asparagine 269. Residues asparagine 269 and asparagine 323 are each glycosylated (N-linked (GlcNAc...) asparagine).

Belongs to the paraoxonase family. Homotrimer. It depends on Ca(2+) as a cofactor. Glycosylated. Post-translationally, the signal sequence is not cleaved.

The protein resides in the membrane. The catalysed reaction is a phenyl acetate + H2O = a phenol + acetate + H(+). It carries out the reaction an N-acyl-L-homoserine lactone + H2O = an N-acyl-L-homoserine + H(+). In terms of biological role, capable of hydrolyzing lactones and a number of aromatic carboxylic acid esters. In Canis lupus familiaris (Dog), this protein is Serum paraoxonase/arylesterase 2 (PON2).